The sequence spans 132 residues: Small ribosomal subunit protein uS8c (132 aa).

It belongs to the universal ribosomal protein uS8 family. As to quaternary structure, part of the 30S ribosomal subunit.

It localises to the plastid. It is found in the chloroplast. Its function is as follows. One of the primary rRNA binding proteins, it binds directly to 16S rRNA central domain where it helps coordinate assembly of the platform of the 30S subunit. In Thalassiosira pseudonana (Marine diatom), this protein is Small ribosomal subunit protein uS8c (rps8).